We begin with the raw amino-acid sequence, 786 residues long: Endonuclease MutS2 (786 aa).

Position 334 to 341 (334 to 341 (GPNTGGKT)) interacts with ATP. In terms of domain architecture, Smr spans 711 to 786 (LDLRGERYEN…GNGATVVYFK (76 aa)).

This sequence belongs to the DNA mismatch repair MutS family. MutS2 subfamily. Homodimer. Binds to stalled ribosomes, contacting rRNA.

Functionally, endonuclease that is involved in the suppression of homologous recombination and thus may have a key role in the control of bacterial genetic diversity. Its function is as follows. Acts as a ribosome collision sensor, splitting the ribosome into its 2 subunits. Detects stalled/collided 70S ribosomes which it binds and splits by an ATP-hydrolysis driven conformational change. Acts upstream of the ribosome quality control system (RQC), a ribosome-associated complex that mediates the extraction of incompletely synthesized nascent chains from stalled ribosomes and their subsequent degradation. Probably generates substrates for RQC. The protein is Endonuclease MutS2 of Ligilactobacillus salivarius (strain UCC118) (Lactobacillus salivarius).